The primary structure comprises 184 residues: Large ribosomal subunit protein uL6 (184 aa).

It belongs to the universal ribosomal protein uL6 family. As to quaternary structure, part of the 50S ribosomal subunit.

In terms of biological role, this protein binds to the 23S rRNA, and is important in its secondary structure. It is located near the subunit interface in the base of the L7/L12 stalk, and near the tRNA binding site of the peptidyltransferase center. In Thermosipho africanus (strain TCF52B), this protein is Large ribosomal subunit protein uL6.